A 331-amino-acid chain; its full sequence is L-lactate dehydrogenase A chain (331 aa).

NAD(+)-binding positions include Gly-29–Lys-57 and Arg-98. Residues Arg-105, Asn-137, and Arg-168 each contribute to the substrate site. NAD(+) is bound at residue Asn-137. The active-site Proton acceptor is His-192. Thr-247 contacts substrate.

The protein belongs to the LDH/MDH superfamily. LDH family. Homotetramer.

Its subcellular location is the cytoplasm. The enzyme catalyses (S)-lactate + NAD(+) = pyruvate + NADH + H(+). Its pathway is fermentation; pyruvate fermentation to lactate; (S)-lactate from pyruvate: step 1/1. Functionally, interconverts simultaneously and stereospecifically pyruvate and lactate with concomitant interconversion of NADH and NAD(+). The protein is L-lactate dehydrogenase A chain (ldha) of Dissostichus mawsoni (Antarctic cod).